The primary structure comprises 149 residues: Calmodulin-like protein 3 (149 aa).

EF-hand domains follow at residues 8–43 (EQVT…LGQN), 44–79 (PTEA…KMKD), 81–116 (DNEE…LGEK), and 117–149 (LSDE…LVSK). 19 residues coordinate Ca(2+): aspartate 21, aspartate 23, aspartate 25, cysteine 27, glutamate 32, aspartate 57, aspartate 59, asparagine 61, threonine 63, glutamate 68, aspartate 94, aspartate 96, asparagine 98, glutamate 105, aspartate 130, aspartate 132, aspartate 134, glutamine 136, and glutamate 141.

Belongs to the calmodulin family. As to quaternary structure, interacts with MYO10, the interaction is calcium-dependent and essential for MYO10 function in filopodial extension. As to expression, expressed in normal mammary, prostate, cervical, and epidermal tissues. It is greatly reduced or undetectable in transformed cells.

Its function is as follows. May function as a specific light chain of unconventional myosin-10 (MYO10), also enhances MYO10 translation, possibly by acting as a chaperone for the emerging MYO10 heavy chain protein. May compete with calmodulin by binding, with different affinities, to cellular substrates. In Homo sapiens (Human), this protein is Calmodulin-like protein 3 (CALML3).